The chain runs to 214 residues: Outer-membrane lipoprotein carrier protein (214 aa).

The first 23 residues, 1–23 (MNKRITVLSLLLATSLSSAAAMA), serve as a signal peptide directing secretion.

It belongs to the LolA family. As to quaternary structure, monomer.

The protein localises to the periplasm. Participates in the translocation of lipoproteins from the inner membrane to the outer membrane. Only forms a complex with a lipoprotein if the residue after the N-terminal Cys is not an aspartate (The Asp acts as a targeting signal to indicate that the lipoprotein should stay in the inner membrane). The sequence is that of Outer-membrane lipoprotein carrier protein from Shewanella frigidimarina (strain NCIMB 400).